Consider the following 787-residue polypeptide: Glutamine-dependent NAD(+) synthetase (787 aa).

One can recognise a CN hydrolase domain in the interval 5-275; that stretch reads VTVAVSTLNQ…VEVTLATIDL (271 aa). Glu45 acts as the Proton acceptor; for glutaminase activity in catalysis. Catalysis depends on Lys114, which acts as the For glutaminase activity. Cys175 (nucleophile; for glutaminase activity) is an active-site residue. The tract at residues 325-787 is ligase; the sequence is MHTPEEEIAL…KIKDRTGIPV (463 aa). 355–362 is an ATP binding site; that stretch reads PLSGGVDS. Ser357 is an active-site residue. At Ser703 the chain carries Phosphoserine.

The protein in the C-terminal section; belongs to the NAD synthetase family.

It catalyses the reaction deamido-NAD(+) + L-glutamine + ATP + H2O = L-glutamate + AMP + diphosphate + NAD(+) + H(+). The protein operates within cofactor biosynthesis; NAD(+) biosynthesis; NAD(+) from deamido-NAD(+) (L-Gln route): step 1/1. In terms of biological role, catalyzes the ATP-dependent amidation of deamido-NAD to form NAD. Uses L-glutamine as a nitrogen source. Because of its role in energy metabolism, involved in the modulation of aged-related cardiac function, mobility, and lifespan. The polypeptide is Glutamine-dependent NAD(+) synthetase (Drosophila melanogaster (Fruit fly)).